The primary structure comprises 229 residues: Small ribosomal subunit protein uS5 (229 aa).

The S5 DRBM domain occupies 61-124; it reads LEEQVLDVKL…AHAKLSLIKV (64 aa).

This sequence belongs to the universal ribosomal protein uS5 family. Part of the 30S ribosomal subunit. Contacts protein S4.

With S4 and S12 plays an important role in translational accuracy. The chain is Small ribosomal subunit protein uS5 from Methanococcus maripaludis (strain C7 / ATCC BAA-1331).